The sequence spans 523 residues: GMP synthase [glutamine-hydrolyzing] (523 aa).

Residues 8 to 205 (KILILDFGSQ…VVGICGCECK (198 aa)) enclose the Glutamine amidotransferase type-1 domain. Cys85 (nucleophile) is an active-site residue. Active-site residues include His179 and Glu181. The region spanning 206–398 (WTAENIIEDA…LGLPAEMLNR (193 aa)) is the GMPS ATP-PPase domain. 233–239 (SGGVDSS) is an ATP binding site.

In terms of assembly, homodimer.

The catalysed reaction is XMP + L-glutamine + ATP + H2O = GMP + L-glutamate + AMP + diphosphate + 2 H(+). The protein operates within purine metabolism; GMP biosynthesis; GMP from XMP (L-Gln route): step 1/1. Its function is as follows. Catalyzes the synthesis of GMP from XMP. In Actinobacillus pleuropneumoniae serotype 3 (strain JL03), this protein is GMP synthase [glutamine-hydrolyzing].